The following is a 160-amino-acid chain: Putative antiporter subunit mnhE2 (160 aa).

Transmembrane regions (helical) follow at residues 22 to 42 (HFKFSTFFSGYLIGLIVIYIL), 55 to 75 (IWVAIKFLGVYLYQLITSSIS), and 100 to 120 (SDWAITFLTILIIITPGSTVI).

This sequence belongs to the CPA3 antiporters (TC 2.A.63) subunit E family. In terms of assembly, may form a heterooligomeric complex that consists of seven subunits: mnhA2, mnhB2, mnhC2, mnhD2, mnhE2, mnhF2 and mnhG2.

It localises to the cell membrane. The sequence is that of Putative antiporter subunit mnhE2 (mnhE2) from Staphylococcus aureus (strain Mu3 / ATCC 700698).